The sequence spans 291 residues: Protein ILRUN (291 aa).

The interval 199–291 (NTQPHRKVEG…LHGPYPFGQS (93 aa)) is disordered. Polar residues predominate over residues 212–228 (PFASPQKNRQSDENNLT). 3 positions are modified to phosphoserine: Ser-215, Ser-222, and Ser-265. Over residues 257–276 (LSQSSVNLSPSSPANNLSVV) the composition is skewed to low complexity.

In terms of assembly, interacts with IRF3; the interaction inhibits IRF3 binding to its DNA consensus sequence.

It is found in the cytoplasm. Its subcellular location is the nucleus. Its function is as follows. Negative regulator of innate antiviral response. Blocks IRF3-dependent cytokine production such as IFNA, IFNB and TNF. Interacts with IRF3 and inhibits IRF3 recruitment to type I IFN promoter sequences while also reducing nuclear levels of the coactivators EP300 and CREBBP. The chain is Protein ILRUN from Mus musculus (Mouse).